A 240-amino-acid polypeptide reads, in one-letter code: Regulatory protein HlyX (240 aa).

Positions 15–28 (CTIHCQNCSISQLC) are essential for the oxygen-regulated activity. The HTH crp-type domain maps to 163-236 (MSAEEKLAAF…GKYITINRMD (74 aa)). Positions 196–215 (RGDIGNYLGLTIETISRLLG) form a DNA-binding region, H-T-H motif.

It is found in the cytoplasm. Its function is as follows. Confers a hemolytic phenotype on E.coli. May regulate, rather than mediate, hemolytic activity. This is Regulatory protein HlyX (hlyX) from Actinobacillus pleuropneumoniae (Haemophilus pleuropneumoniae).